The sequence spans 48 residues: Delta-stichotoxin-Hcr1e (48 aa).

3 cysteine pairs are disulfide-bonded: Cys-3/Cys-43, Cys-5/Cys-33, and Cys-26/Cys-44.

This sequence belongs to the sea anemone sodium channel inhibitory toxin family. Type II subfamily.

It is found in the secreted. It localises to the nematocyst. Functionally, binds to site 3 of voltage-gated sodium channels and inhibits the inactivation process. The polypeptide is Delta-stichotoxin-Hcr1e (Radianthus crispa (Leathery sea anemone)).